Here is a 97-residue protein sequence, read N- to C-terminus: MTDLRHYDVIVSPVITEKSTMVSEHNQVVFNVARKATKPEIKAAVEALFGVKVTAVNTAVRKGKVKRFCGLVGRQSDVKKAIVTLAEGQSIDVSTGL.

Belongs to the universal ribosomal protein uL23 family. As to quaternary structure, part of the 50S ribosomal subunit. Contacts protein L29, and trigger factor when it is bound to the ribosome.

In terms of biological role, one of the early assembly proteins it binds 23S rRNA. One of the proteins that surrounds the polypeptide exit tunnel on the outside of the ribosome. Forms the main docking site for trigger factor binding to the ribosome. This Brucella suis (strain ATCC 23445 / NCTC 10510) protein is Large ribosomal subunit protein uL23.